The chain runs to 315 residues: Alpha- and gamma-adaptin-binding protein p34 (315 aa).

The segment at 197-234 is disordered; the sequence is IGSADPCHPEQPHLPAADSTESLSDHRGGASNTTDAQV. Phosphoserine occurs at positions 310 and 311.

In terms of assembly, associated with AP-1 and AP-2 complexes. As to expression, widely expressed, including in skin and keratinocytes, with highest levels in adrenal gland, rectum and thymus.

The protein localises to the cytoplasm. It localises to the cytosol. May be involved in endocytic recycling of growth factor receptors such as EGFR. This chain is Alpha- and gamma-adaptin-binding protein p34 (AAGAB), found in Homo sapiens (Human).